The sequence spans 117 residues: Immunoglobulin kappa variable 1-12 (117 aa).

Residues 1-22 (MDMRVPAQLLGLLLLWFPGSRC) form the signal peptide. The segment at 23–45 (DIQMTQSPSSVSASVGDRVTITC) is framework-1. An Ig-like domain is found at 24–117 (IQMTQSPSSV…YYCQQANSFP (94 aa)). A disulfide bond links Cys-45 and Cys-110. The complementarity-determining-1 stretch occupies residues 46–56 (RASQGISSWLA). The interval 57–71 (WYQQKPGKAPKLLIY) is framework-2. The complementarity-determining-2 stretch occupies residues 72–78 (AASSLQS). Positions 79–110 (GVPSRFSGSGSGTDFTLTISSLQPEDFATYYC) are framework-3. A complementarity-determining-3 region spans residues 111-117 (QQANSFP).

In terms of assembly, immunoglobulins are composed of two identical heavy chains and two identical light chains; disulfide-linked.

It localises to the secreted. The protein resides in the cell membrane. In terms of biological role, v region of the variable domain of immunoglobulin light chains that participates in the antigen recognition. Immunoglobulins, also known as antibodies, are membrane-bound or secreted glycoproteins produced by B lymphocytes. In the recognition phase of humoral immunity, the membrane-bound immunoglobulins serve as receptors which, upon binding of a specific antigen, trigger the clonal expansion and differentiation of B lymphocytes into immunoglobulins-secreting plasma cells. Secreted immunoglobulins mediate the effector phase of humoral immunity, which results in the elimination of bound antigens. The antigen binding site is formed by the variable domain of one heavy chain, together with that of its associated light chain. Thus, each immunoglobulin has two antigen binding sites with remarkable affinity for a particular antigen. The variable domains are assembled by a process called V-(D)-J rearrangement and can then be subjected to somatic hypermutations which, after exposure to antigen and selection, allow affinity maturation for a particular antigen. This is Immunoglobulin kappa variable 1-12 from Homo sapiens (Human).